A 176-amino-acid chain; its full sequence is WASH complex subunit 3 (176 aa).

Residues 47–74 (ETKFVEMERQLQKTEAALIILEAKLASI) are a coiled coil. Disordered regions lie at residues 84-123 (ATEA…PESV) and 152-176 (KMQS…GQRE). Residues 104–115 (TTEPPTTENPTE) are compositionally biased toward low complexity.

Belongs to the CCDC53 family. Component of the WASH complex.

The protein localises to the early endosome. Acts at least in part as component of the WASH complex which may regulate wash nucleation-promoting factor (NPF) activity and is required for its membrane targeting during endosomal sorting. During embryogenesis, not involved in the wash-dependent developmental migration of hemocytes anteriorly from the tail. In Drosophila melanogaster (Fruit fly), this protein is WASH complex subunit 3.